The primary structure comprises 568 residues: Urease subunit alpha (568 aa).

The Urease domain maps to 133–568 (GGLDIHIHFN…ELPLAQRYLL (436 aa)). The Ni(2+) site is built by histidine 138, histidine 140, and lysine 217. At lysine 217 the chain carries N6-carboxylysine. Histidine 219 provides a ligand contact to substrate. Residues histidine 246 and histidine 272 each contribute to the Ni(2+) site. The active-site Proton donor is the histidine 320. Aspartate 360 contacts Ni(2+).

This sequence belongs to the metallo-dependent hydrolases superfamily. Urease alpha subunit family. Heterotrimer of UreA (gamma), UreB (beta) and UreC (alpha) subunits. Three heterotrimers associate to form the active enzyme. The cofactor is Ni cation. Post-translationally, carboxylation allows a single lysine to coordinate two nickel ions.

It localises to the cytoplasm. It carries out the reaction urea + 2 H2O + H(+) = hydrogencarbonate + 2 NH4(+). The protein operates within nitrogen metabolism; urea degradation; CO(2) and NH(3) from urea (urease route): step 1/1. The polypeptide is Urease subunit alpha (Haloarcula marismortui (strain ATCC 43049 / DSM 3752 / JCM 8966 / VKM B-1809) (Halobacterium marismortui)).